Consider the following 685-residue polypeptide: Amino acid transporter heavy chain SLC3A1 (685 aa).

Residues 1–11 (MAEDKSKRDSI) show a composition bias toward basic and acidic residues. The segment at 1–56 (MAEDKSKRDSIEMSMKGCQTNNGFVHNEDILEQTPDPGSSTDNLKHSTRGILGSQE) is disordered. Topologically, residues 1-87 (MAEDKSKRDS…GQARYRIPRE (87 aa)) are cytoplasmic. Phosphoserine is present on S10. A helical; Signal-anchor for type II membrane protein transmembrane segment spans residues 88–108 (ILFWLTVASVLVLIAATIAII). Residues 109–685 (ALSPKCLDWW…SVLNILYTSC (577 aa)) lie on the Extracellular side of the membrane. N214 provides a ligand contact to Ca(2+). Residues N214 and N261 are each glycosylated (N-linked (GlcNAc...) asparagine). A disulfide bridge links C242 with C273. Ca(2+) contacts are provided by D284, F318, L319, and E321. Residues N332, N495, N513, and N575 are each glycosylated (N-linked (GlcNAc...) asparagine). Cystine bridges form between C571-C666 and C673-C685.

In terms of assembly, disulfide-linked heterodimer composed of the catalytic light subunit SLC7A9 and the heavy subunit SLC3A1. The heterodimer is the minimal functional unit. Assembles in non-covalently linked heterotetramers (dimers of heterodimers) and higher order oligomers; the oligomerization is mediated by SLC3A1 likely to prevent degradation in the endoplasmic reticulum and facilitate heteromer trafficking to the plasma membrane. Disulfide-linked heterodimer composed of the catalytic light subunit SLC7A13 and the heavy subunit SLC3A1. Expressed in the brush border membrane in the kidney (at protein level). Predominantly expressed in the kidney, small intestine and pancreas. Weakly expressed in liver.

The protein resides in the cell membrane. Its subcellular location is the apical cell membrane. In terms of biological role, acts as a chaperone that facilitates biogenesis and trafficking of functional transporter heteromers to the plasma membrane. Associates with SLC7A9 to form a functional transporter complex that mediates the electrogenic exchange between cationic amino acids and neutral amino acids, with a stoichiometry of 1:1. SLC7A9-SLC3A1 transporter has system b(0,+)-like activity with high affinity for extracellular cationic amino acids and L-cystine and lower affinity for intracellular neutral amino acids. Substrate exchange is driven by high concentration of intracellular neutral amino acids and the intracellular reduction of L-cystine to L-cysteine. SLC7A9-SLC3A1 acts as a major transporter for reabsorption of L-cystine and dibasic amino acids across the brush border membrane in early proximal tubules. Associates with SLC7A13 to form a functional complex that transports anionic and neutral amino acids via exchange or facilitated diffusion. SLC7A13-SLC3A1 may act as a major transporter for L-cystine in late proximal tubules, ensuring its reabsorption from the luminal fluid in exchange for cytosolic L-glutamate or L-aspartate. The chain is Amino acid transporter heavy chain SLC3A1 from Homo sapiens (Human).